The following is a 197-amino-acid chain: Glycerol-3-phosphate acyltransferase (197 aa).

The next 4 helical transmembrane spans lie at 5–25 (LILI…VGKI), 70–90 (LPVL…AVIG), 111–131 (VMLF…FIVL), and 153–173 (IFFT…AFIF).

This sequence belongs to the PlsY family. In terms of assembly, probably interacts with PlsX.

The protein localises to the cell membrane. It carries out the reaction an acyl phosphate + sn-glycerol 3-phosphate = a 1-acyl-sn-glycero-3-phosphate + phosphate. The protein operates within lipid metabolism; phospholipid metabolism. Catalyzes the transfer of an acyl group from acyl-phosphate (acyl-PO(4)) to glycerol-3-phosphate (G3P) to form lysophosphatidic acid (LPA). This enzyme utilizes acyl-phosphate as fatty acyl donor, but not acyl-CoA or acyl-ACP. The polypeptide is Glycerol-3-phosphate acyltransferase (Geobacillus sp. (strain WCH70)).